A 500-amino-acid chain; its full sequence is Zinc finger protein PLAG1 (500 aa).

Residues 1-30 (MATVIPGDLSEVRDTQKVPSGKRKRGETKP) form a disordered region. The tract at residues 2-84 (ATVIPGDLSE…SKYKLQRHMA (83 aa)) is interaction with KPNA2. Positions 22–25 (KRKR) match the Nuclear localization signal motif. 7 C2H2-type zinc fingers span residues 34 to 56 (FPCQLCDKAFNSVEKLKVHSYSH), 62 to 86 (YKCIQQDCTKAFVSKYKLQRHMATH), 92 to 114 (HKCNYCEKMFHRKDHLKNHLHTH), 121 to 143 (FKCEECGKNYNTKLGFKRHLALH), 150 to 172 (LTCKVCLQTFESTGVLLEHLKSH), 185 to 207 (HQCEHCDRRFYTRKDVRRHMVVH), and 213 to 236 (FLCQYCAQRFGRKDHLTRHMKKSH). Positions 41–242 (KAFNSVEKLK…KKSHNQELLK (202 aa)) are decreased nuclear import with localization in the nucleus but also in the cytoplasm. A repression domain; contains 3 sumoylation motifs and massively decrease transcription activity region spans residues 243–384 (VKTEPVDFLD…QASSSSKLGL (142 aa)). The segment at 243–500 (VKTEPVDFLD…TLPRFHQAFQ (258 aa)) is activates transcription; Inhibition of nuclear import due to lack of NLS and KPNA2 interaction. Glycyl lysine isopeptide (Lys-Gly) (interchain with G-Cter in SUMO) cross-links involve residues lysine 244 and lysine 263. The tract at residues 365-388 (GGVPSSSQDSQASSSSKLGLDPQI) is disordered. Residues 369–380 (SSSQDSQASSSS) show a composition bias toward low complexity. The segment at 385-500 (DPQIGSLDDG…TLPRFHQAFQ (116 aa)) is massively activates transcription.

It belongs to the krueppel C2H2-type zinc-finger protein family. As to quaternary structure, interacts with KPNA2, which escorts protein to the nucleus via interaction with nuclear localization signal. Interacts with E3 SUMO-protein ligase PIAS1, PIAS2 and PIAS4. Sumoylated with SUMO1; which inhibits transcriptional activity, but does not affect nuclear localization. Blockers of sumoylation pathway such as SENP3 and inactive UBE2I increases transcriptional capacity. Sumoylation is increased in the presence of PIAS1. In terms of processing, acetylated by lysine acetyltransferase EP300; which activates transcriptional capacity. Lysine residues that are sumoylated also seem to be target for acetylation. Expressed in fetal tissues such as lung, liver and kidney. Not detected or weak detection in normal adult tissues, but highly expressed in salivary gland with benign or malignant pleiomorphic adenomas with or without 8q12 aberrations, with preferential occurrence in benign tumors.

The protein localises to the nucleus. Functionally, transcription factor whose activation results in up-regulation of target genes, such as IGFII, leading to uncontrolled cell proliferation: when overexpressed in cultured cells, higher proliferation rate and transformation are observed. Other target genes such as CRLF1, CRABP2, CRIP2, PIGF are strongly induced in cells with PLAG1 induction. Proto-oncogene whose ectopic expression can trigger the development of pleomorphic adenomas of the salivary gland and lipoblastomas. Overexpression is associated with up-regulation of IGFII, is frequently observed in hepatoblastoma, common primary liver tumor in childhood. Cooperates with CBFB-MYH11, a fusion gene important for myeloid leukemia. In Homo sapiens (Human), this protein is Zinc finger protein PLAG1 (PLAG1).